The primary structure comprises 439 residues: Probable aspartic-type endopeptidase AFUA_3G01220 (439 aa).

The N-terminal stretch at 1 to 20 is a signal peptide; it reads MHFSIGSLFLYLIASASCTA. The interval 31 to 50 is disordered; it reads RTPFTTSTSKPSAFTNPSTD. Residues 32–45 show a composition bias toward low complexity; the sequence is TPFTTSTSKPSAFT. Residues 95-436 form the Peptidase A1 domain; sequence FATSINIGNQ…DVGAAEMRFA (342 aa). N-linked (GlcNAc...) asparagine glycosylation occurs at Asn-103. Residue Asp-111 is part of the active site. N-linked (GlcNAc...) asparagine glycosylation is found at Asn-149, Asn-178, Asn-187, Asn-253, Asn-256, Asn-276, and Asn-308. The active site involves Asp-323. Asn-361 and Asn-394 each carry an N-linked (GlcNAc...) asparagine glycan.

This sequence belongs to the peptidase A1 family.

The protein resides in the secreted. In terms of biological role, probable aspartic-type endopeptidase which contributes to virulence. The polypeptide is Probable aspartic-type endopeptidase AFUA_3G01220 (Aspergillus fumigatus (strain ATCC MYA-4609 / CBS 101355 / FGSC A1100 / Af293) (Neosartorya fumigata)).